The chain runs to 522 residues: MTPTRCDRTPAWGALQAAYQTQGRAFDLRRAFALDAGRFEAFSQGAPHVFADLSKNLIDAGTEQQLLELARQTGLEQHRDAMFAGEKINTTEQRAVMHWLLRTPPADPAMPAQSVHRHMAETLHEVHTTLEAMLAFAEAVRADETITDIVNIGIGGSDLGPQMAVLALDAFVLPGKRFHFVSNVDGHELAAVLRRLKPQSTLFLIASKTFTTIETMTNARSAKAWFEAQGGTDIARHFAALTTNVAAANNFGISTTFGFWDWVGGRYSVWSAIGLPLAIAIGAVGFRDFLAGAHAMDRHFATVPLAQNLPVRLGLLDVWYRNFHGFTSRSIAPYHSALKRYPAYLQQLEMESNGKRVDAHGEALPYGTAPVLWGEPGTNGQHAYFQMLHQGTDVVPVEFVAVKQAAHDLPGHHDLLLANVLAQAQALMVGQADAGGHKNFPGNRPSTFLLLDALTPASLGALIALQEHRVFVSGSVWGINSFDQWGVELGKVLAKDVAVRLSSGNVTGLDGSTAGLLARLRA.

E351 functions as the Proton donor in the catalytic mechanism. Active-site residues include H382 and K491.

It belongs to the GPI family.

Its subcellular location is the cytoplasm. It carries out the reaction alpha-D-glucose 6-phosphate = beta-D-fructose 6-phosphate. It participates in carbohydrate biosynthesis; gluconeogenesis. Its pathway is carbohydrate degradation; glycolysis; D-glyceraldehyde 3-phosphate and glycerone phosphate from D-glucose: step 2/4. Its function is as follows. Catalyzes the reversible isomerization of glucose-6-phosphate to fructose-6-phosphate. The chain is Glucose-6-phosphate isomerase from Albidiferax ferrireducens (strain ATCC BAA-621 / DSM 15236 / T118) (Rhodoferax ferrireducens).